Consider the following 1203-residue polypeptide: DNA-directed RNA polymerase subunit beta' (1203 aa).

Residues Cys60, Cys62, Cys75, and Cys78 each contribute to the Zn(2+) site. Residues Asp449, Asp451, and Asp453 each coordinate Mg(2+). Zn(2+) contacts are provided by Cys818, Cys892, Cys899, and Cys902. Positions Arg1180–Val1203 are disordered. Over residues Glu1190–Val1203 the composition is skewed to acidic residues.

This sequence belongs to the RNA polymerase beta' chain family. As to quaternary structure, the RNAP catalytic core consists of 2 alpha, 1 beta, 1 beta' and 1 omega subunit. When a sigma factor is associated with the core the holoenzyme is formed, which can initiate transcription. It depends on Mg(2+) as a cofactor. Zn(2+) serves as cofactor.

It carries out the reaction RNA(n) + a ribonucleoside 5'-triphosphate = RNA(n+1) + diphosphate. In terms of biological role, DNA-dependent RNA polymerase catalyzes the transcription of DNA into RNA using the four ribonucleoside triphosphates as substrates. The sequence is that of DNA-directed RNA polymerase subunit beta' from Oceanobacillus iheyensis (strain DSM 14371 / CIP 107618 / JCM 11309 / KCTC 3954 / HTE831).